Consider the following 378-residue polypeptide: Carbamoyl phosphate synthase small chain (378 aa).

The CPSase stretch occupies residues 1–189 (MTKPAILALA…DSHPTIDAAD (189 aa)). Serine 47, glycine 241, and glycine 243 together coordinate L-glutamine. The region spanning 193–378 (HVVAFDYGVK…RFTDAMAKRR (186 aa)) is the Glutamine amidotransferase type-1 domain. Cysteine 269 serves as the catalytic Nucleophile. Leucine 270, glutamine 273, asparagine 311, glycine 313, and phenylalanine 314 together coordinate L-glutamine. Active-site residues include histidine 353 and glutamate 355.

This sequence belongs to the CarA family. In terms of assembly, composed of two chains; the small (or glutamine) chain promotes the hydrolysis of glutamine to ammonia, which is used by the large (or ammonia) chain to synthesize carbamoyl phosphate. Tetramer of heterodimers (alpha,beta)4.

The enzyme catalyses hydrogencarbonate + L-glutamine + 2 ATP + H2O = carbamoyl phosphate + L-glutamate + 2 ADP + phosphate + 2 H(+). It carries out the reaction L-glutamine + H2O = L-glutamate + NH4(+). Its pathway is amino-acid biosynthesis; L-arginine biosynthesis; carbamoyl phosphate from bicarbonate: step 1/1. It functions in the pathway pyrimidine metabolism; UMP biosynthesis via de novo pathway; (S)-dihydroorotate from bicarbonate: step 1/3. Functionally, small subunit of the glutamine-dependent carbamoyl phosphate synthetase (CPSase). CPSase catalyzes the formation of carbamoyl phosphate from the ammonia moiety of glutamine, carbonate, and phosphate donated by ATP, constituting the first step of 2 biosynthetic pathways, one leading to arginine and/or urea and the other to pyrimidine nucleotides. The small subunit (glutamine amidotransferase) binds and cleaves glutamine to supply the large subunit with the substrate ammonia. This chain is Carbamoyl phosphate synthase small chain, found in Pseudomonas putida (strain ATCC 47054 / DSM 6125 / CFBP 8728 / NCIMB 11950 / KT2440).